The chain runs to 350 residues: Nicotinate-nucleotide--dimethylbenzimidazole phosphoribosyltransferase (350 aa).

The Proton acceptor role is filled by Glu317.

It belongs to the CobT family.

The catalysed reaction is 5,6-dimethylbenzimidazole + nicotinate beta-D-ribonucleotide = alpha-ribazole 5'-phosphate + nicotinate + H(+). The protein operates within nucleoside biosynthesis; alpha-ribazole biosynthesis; alpha-ribazole from 5,6-dimethylbenzimidazole: step 1/2. Functionally, catalyzes the synthesis of alpha-ribazole-5'-phosphate from nicotinate mononucleotide (NAMN) and 5,6-dimethylbenzimidazole (DMB). In Shewanella sp. (strain MR-7), this protein is Nicotinate-nucleotide--dimethylbenzimidazole phosphoribosyltransferase.